Consider the following 149-residue polypeptide: Deoxyuridine 5'-triphosphate nucleotidohydrolase (149 aa).

Residues 68–70, Asn-81, 85–87, and Lys-95 each bind substrate; these read RSG and TVD.

This sequence belongs to the dUTPase family. The cofactor is Mg(2+).

The enzyme catalyses dUTP + H2O = dUMP + diphosphate + H(+). It functions in the pathway pyrimidine metabolism; dUMP biosynthesis; dUMP from dCTP (dUTP route): step 2/2. Its function is as follows. This enzyme is involved in nucleotide metabolism: it produces dUMP, the immediate precursor of thymidine nucleotides and it decreases the intracellular concentration of dUTP so that uracil cannot be incorporated into DNA. The polypeptide is Deoxyuridine 5'-triphosphate nucleotidohydrolase (Neorickettsia sennetsu (strain ATCC VR-367 / Miyayama) (Ehrlichia sennetsu)).